The following is a 178-amino-acid chain: Natriuretic and helokinestatin peptides (178 aa).

Residues 1–25 (MNPRLACSTWLPLLLVLFTLDQGRA) form the signal peptide. Propeptides lie at residues 26–58 (NPVE…SEEN), 69–73 (ASDEN), 85–89 (ASDEN), 103–112 (ASEQKGPPFN), and 123–146 (AANE…RNKR). 2 disordered regions span residues 69-107 (ASDE…SEQK) and 135-155 (RSFE…GCFG). The cysteines at positions 153 and 169 are disulfide-linked.

It in the C-terminal section; belongs to the natriuretic peptide family. In terms of tissue distribution, expressed by the venom gland.

It is found in the secreted. Its function is as follows. Helokinestatins antagonize the vasodilatory actions of bradykinin at the B2 bradykinin receptor (BDKRB2), with helokinestatin-1 being the most potent antagonist. Functionally, exhibits hypotensive and vasodepressor activities, possibly by targeting natriuretic peptide receptors NPR1 and NPR2. The polypeptide is Natriuretic and helokinestatin peptides (Heloderma suspectum cinctum (Banded Gila monster)).